The sequence spans 66 residues: Large ribosomal subunit protein uL29 (66 aa).

The protein belongs to the universal ribosomal protein uL29 family.

The chain is Large ribosomal subunit protein uL29 from Rhizobium etli (strain CIAT 652).